Consider the following 213-residue polypeptide: FMN-dependent NADH:quinone oxidoreductase (213 aa).

Residue 17–19 (SSS) participates in FMN binding.

Belongs to the azoreductase type 1 family. In terms of assembly, homodimer. FMN serves as cofactor.

It catalyses the reaction 2 a quinone + NADH + H(+) = 2 a 1,4-benzosemiquinone + NAD(+). The enzyme catalyses N,N-dimethyl-1,4-phenylenediamine + anthranilate + 2 NAD(+) = 2-(4-dimethylaminophenyl)diazenylbenzoate + 2 NADH + 2 H(+). Functionally, quinone reductase that provides resistance to thiol-specific stress caused by electrophilic quinones. Its function is as follows. Also exhibits azoreductase activity. Catalyzes the reductive cleavage of the azo bond in aromatic azo compounds to the corresponding amines. This Ruminiclostridium cellulolyticum (strain ATCC 35319 / DSM 5812 / JCM 6584 / H10) (Clostridium cellulolyticum) protein is FMN-dependent NADH:quinone oxidoreductase.